Reading from the N-terminus, the 128-residue chain is Ribosome-binding factor A (128 aa).

Belongs to the RbfA family. Monomer. Binds 30S ribosomal subunits, but not 50S ribosomal subunits or 70S ribosomes.

The protein resides in the cytoplasm. In terms of biological role, one of several proteins that assist in the late maturation steps of the functional core of the 30S ribosomal subunit. Associates with free 30S ribosomal subunits (but not with 30S subunits that are part of 70S ribosomes or polysomes). Required for efficient processing of 16S rRNA. May interact with the 5'-terminal helix region of 16S rRNA. This chain is Ribosome-binding factor A, found in Microcystis aeruginosa (strain NIES-843 / IAM M-2473).